Here is a 91-residue protein sequence, read N- to C-terminus: Small ribosomal subunit protein uS15 (91 aa).

The protein belongs to the universal ribosomal protein uS15 family. As to quaternary structure, part of the 30S ribosomal subunit. Forms a bridge to the 50S subunit in the 70S ribosome, contacting the 23S rRNA.

One of the primary rRNA binding proteins, it binds directly to 16S rRNA where it helps nucleate assembly of the platform of the 30S subunit by binding and bridging several RNA helices of the 16S rRNA. Functionally, forms an intersubunit bridge (bridge B4) with the 23S rRNA of the 50S subunit in the ribosome. The sequence is that of Small ribosomal subunit protein uS15 from Hydrogenobaculum sp. (strain Y04AAS1).